The primary structure comprises 490 residues: Tektin-3 (490 aa).

3 O-linked (GalNAc...) threonine glycosylation sites follow: Thr7, Thr9, and Thr10. 6 N-linked (GlcNAc...) asparagine glycosylation sites follow: Asn41, Asn86, Asn103, Asn111, Asn276, and Asn344. The stretch at 424-451 (VHEVDDTIQTLQQRLRDAEDTLQSLVHI) forms a coiled coil.

It belongs to the tektin family. In terms of assembly, microtubule inner protein component of sperm flagellar doublet microtubules. Interacts with TEKT1, TEKT2, TEKT4 and TEKT5. Interacts with CCDC38. Post-translationally, N- and O-glycosylated. In terms of processing, may be proteolytically processed during the epididymal transit of spermatozoa. Ubiquitinated, leading to its degradation. Deubiquitinated by USP16, promoting its stability. In terms of tissue distribution, expressed in spermatozoa. Expressed in airway epithelial cells.

Its subcellular location is the cytoplasm. The protein resides in the cytoskeleton. The protein localises to the cilium axoneme. It localises to the flagellum axoneme. It is found in the cytoplasmic vesicle. Its subcellular location is the secretory vesicle. The protein resides in the acrosome outer membrane. Microtubule inner protein (MIP) part of the dynein-decorated doublet microtubules (DMTs) in cilia and flagellar axoneme. Forms filamentous polymers in the walls of ciliary and flagellar microtubules. Required for normal sperm mobility. The chain is Tektin-3 (TEKT3) from Homo sapiens (Human).